The following is a 249-amino-acid chain: ATP synthase subunit a (249 aa).

6 helical membrane-spanning segments follow: residues 30–50 (SAYMLLAVAIISLLMIGGSAG), 84–104 (FFPLVFSLFMFIMVSNMVGII), 113–133 (HIIVTAALAFLVFFTVLIYGF), 143–163 (IFVPSGVPGFILPLVVFIEVF), 196–216 (LLAGLGIAGYFGAVLPLGMVV), and 221–241 (LELLVAFLQAYVFAILTCIYL).

This sequence belongs to the ATPase A chain family. As to quaternary structure, F-type ATPases have 2 components, CF(1) - the catalytic core - and CF(0) - the membrane proton channel. CF(1) has five subunits: alpha(3), beta(3), gamma(1), delta(1), epsilon(1). CF(0) has four main subunits: a, b, b' and c.

Its subcellular location is the cell inner membrane. Its function is as follows. Key component of the proton channel; it plays a direct role in the translocation of protons across the membrane. This is ATP synthase subunit a from Rhodopseudomonas palustris (strain BisA53).